The sequence spans 186 residues: TATA-box-binding protein D (186 aa).

Repeat copies occupy residues 10 to 86 and 101 to 179.

This sequence belongs to the TBP family.

Functionally, general factor that plays a role in the activation of archaeal genes transcribed by RNA polymerase. Binds specifically to the TATA box promoter element which lies close to the position of transcription initiation. In Halobacterium salinarum (strain ATCC 700922 / JCM 11081 / NRC-1) (Halobacterium halobium), this protein is TATA-box-binding protein D (tbpD).